The sequence spans 1816 residues: Kinesin-like protein KIF1B (1816 aa).

S2 is modified (N-acetylserine). The 350-residue stretch at 5 to 354 (SVKVAVRVRP…LRYADRAKQI (350 aa)) folds into the Kinesin motor domain. 97–104 (GQTGAGKS) contributes to the ATP binding site. The tract at residues 270–350 (NINKSLTTLG…TLSTLRYADR (81 aa)) is interaction with KIFBP. Residues 365–386 (NAKLVRELKEEVTRLKDLLRAQ) adopt a coiled-coil conformation. Residues 431 to 450 (FSTASMGSLTSSPSSCSLSS) are disordered. The segment covering 432–450 (STASMGSLTSSPSSCSLSS) has biased composition (low complexity). Residues 470–502 (GEEAIERLKESEKIIAELNETWEEKLRKTEAIR) adopt a coiled-coil conformation. An FHA domain is found at 556–612 (TRVGQADAERRQDIVLSGAHIKEEHCIFRSERSNSGEVIVTLEPCERSETYVNGKRV). Phosphothreonine is present on residues T647 and T652. Q663 and E665 each carry phosphoserine. Coiled-coil stretches lie at residues 668–737 (EKQG…EEEV) and 841–869 (SLEKLKQRLDLMREMYDRAGEMASSAQDE). A phosphoserine mark is found at S1054 and S1057. A Phosphothreonine modification is found at T1075. A phosphoserine mark is found at N1141, S1416, S1454, and S1487. A disordered region spans residues 1550–1570 (STTTFESAITPSESSGYDSGD). Polar residues predominate over residues 1554–1566 (FESAITPSESSGY). Residues S1573, S1603, S1610, and S1613 each carry the phosphoserine modification. Residues 1617–1660 (RDPSESSFSSATLTPSSTCPSLVDSRSNSLDQKTPEANSRASSP) are disordered. Positions 1621 to 1634 (ESSFSSATLTPSST) are enriched in low complexity. Polar residues predominate over residues 1640–1658 (DSRSNSLDQKTPEANSRAS). One can recognise a PH domain in the interval 1702-1799 (VSKKGYLHFK…WLYAFNPLLA (98 aa)).

This sequence belongs to the TRAFAC class myosin-kinesin ATPase superfamily. Kinesin family. Unc-104 subfamily. In terms of assembly, monomer. Interacts with KIFBP; positively regulates KIF1B microtubule motor activity. Interacts (via C-terminus end of the kinesin-motor domain) with CHP1; the interaction occurs in a calcium-dependent manner. Interacts with MADD (via death domain); links this isoform to Rab3-carrying vesicles in anterograde synaptic vesicle transport. As to expression, isoform 3 is abundant in the skeletal muscle. It is also expressed in fetal brain, lung and kidney, and adult heart, placenta, testis, ovary and small intestine. Isoform 2 is abundant in the brain and also expressed in fetal heart, lung, liver and kidney, and adult skeletal muscle, placenta, liver, kidney, heart, spleen, thymus, prostate, testis, ovary, small intestine, colon and pancreas.

It localises to the cytoplasm. The protein localises to the cytoskeleton. Its subcellular location is the cytoplasmic vesicle. The protein resides in the secretory vesicle. It is found in the synaptic vesicle membrane. It localises to the mitochondrion. It carries out the reaction ATP + H2O + a kinesin associated with a microtubule at position (n) = ADP + phosphate a kinesin associated with a microtubule at position (n+1, toward the plus end).. In terms of biological role, has a plus-end-directed microtubule motor activity and functions as a motor for transport of vesicles and organelles along microtubules. Has a plus-end-directed microtubule motor activity and functions as a motor for anterograde synaptic vesicle transport along axonal microtubules from the cell body to the presynapse in neuronal cells. Functions as a downstream effector in a developmental apoptotic pathway that is activated when nerve growth factor (NGF) becomes limiting for neuronal progenitor cells. Its function is as follows. Has a plus-end-directed microtubule motor activity and functions as a motor for anterograde transport of mitochondria. This is Kinesin-like protein KIF1B from Homo sapiens (Human).